Here is a 387-residue protein sequence, read N- to C-terminus: Decapping nuclease RAI1 (387 aa).

Glutamate 172 is a binding site for a divalent metal cation. At serine 198 the chain carries Phosphoserine. Glutamate 221 is a binding site for substrate. Residues aspartate 223, glutamate 241, and leucine 242 each coordinate a divalent metal cation. Residues lysine 243 and glutamine 267 each coordinate substrate. An interaction with RAT1 region spans residues 273–387 (IPRIIYGFKD…GFKEWRKSLK (115 aa)).

It belongs to the DXO/Dom3Z family. In terms of assembly, interacts with RAT1, RTT103 and pre-60S ribosomal subunits. Interacts with RAT1; the interaction is direct, stabilizes RAT1 protein structure and stimulates its exoribonuclease activity. The interaction also stimulates RAI1 pyrophosphohydrolase activity, probably by recruiting it to mRNA substrates. A divalent metal cation is required as a cofactor.

The protein localises to the nucleus. The enzyme catalyses a 5'-end NAD(+)-phospho-ribonucleoside in mRNA + H2O = a 5'-end phospho-ribonucleoside in mRNA + NAD(+) + H(+). It carries out the reaction a 5'-end (N(7)-methyl 5'-triphosphoguanosine)-ribonucleoside-ribonucleotide in mRNA + H2O = a (N(7)-methyl 5'-triphosphoguanosine)-nucleoside + a 5'-end phospho-ribonucleoside in mRNA + H(+). The catalysed reaction is a 5'-end triphospho-ribonucleoside in mRNA + H2O = a 5'-end phospho-ribonucleoside in mRNA + diphosphate + H(+). Functionally, decapping enzyme for NAD-capped RNAs: specifically hydrolyzes the nicotinamide adenine dinucleotide (NAD) cap from a subset of RNAs by removing the entire NAD moiety from the 5'-end of an NAD-capped RNA. The NAD-cap is present at the 5'-end of some RNAs and snoRNAs. In contrast to the canonical 5'-end N7 methylguanosine (m7G) cap, the NAD cap promotes mRNA decay. Also acts as a non-canonical decapping enzyme that removes the entire cap structure of m7G capped or incompletely capped RNAs. Has decapping activity toward incomplete 5'-end m7G cap mRNAs such as unmethylated 5'-end-capped RNA (cap0), while it has no activity toward 2'-O-ribose methylated m7G cap (cap1). Also possesses RNA 5'-pyrophosphohydrolase activity by hydrolyzing the 5'-end triphosphate to release pyrophosphates. Stimulates exoribonuclease activity of RAT1, allowing it to degrade RNAs with stable secondary structure more effectively. Required for the processing of nuclear mRNA and rRNA precursors. May promote termination of transcription by RNA polymerase II. The chain is Decapping nuclease RAI1 from Saccharomyces cerevisiae (strain ATCC 204508 / S288c) (Baker's yeast).